We begin with the raw amino-acid sequence, 314 residues long: Olfactory receptor 5B12 (314 aa).

At 1–23 (MENNTEVTEFILVGLTDDPELQI) the chain is on the extracellular side. An N-linked (GlcNAc...) asparagine glycan is attached at Asn3. A helical membrane pass occupies residues 24-44 (PLFIVFLFIYLITLVGNLGMI). Over 45–52 (ELILLDSC) the chain is Cytoplasmic. A helical membrane pass occupies residues 53–73 (LHTPMYFFLSNLSLVDFGYSS). Residues 74–97 (AVTPKVMVGFLTGDKFILYNACAT) are Extracellular-facing. Cys95 and Cys187 form a disulfide bridge. The chain crosses the membrane as a helical span at residues 98-118 (QFFFFVAFITAESFLLASMAY). At 119-137 (DRYAALCKPLHYTTTMTTN) the chain is on the cytoplasmic side. Residues 138-158 (VCACLAIGSYICGFLNASIHT) traverse the membrane as a helical segment. Over 159–194 (GNTFRLSFCRSNVVEHFFCDAPPLLTLSCSDNYISE) the chain is Extracellular. A helical membrane pass occupies residues 195 to 215 (MVIFFVVGFNDLFSILVILIS). At 216 to 235 (YLFIFITIMKMRSPEGRQKA) the chain is on the cytoplasmic side. The chain crosses the membrane as a helical span at residues 236–256 (FSTCASHLTAVSIFYGTGIFM). Residues 257 to 269 (YLRPNSSHFMGTD) are Extracellular-facing. Residue Asn261 is glycosylated (N-linked (GlcNAc...) asparagine). A helical membrane pass occupies residues 270–290 (KMASVFYAIVIPMLNPLVYSL). Over 291 to 314 (RNKEVKSAFKKTVGKAKASIGFIF) the chain is Cytoplasmic.

The protein belongs to the G-protein coupled receptor 1 family.

The protein resides in the cell membrane. Odorant receptor. This Homo sapiens (Human) protein is Olfactory receptor 5B12 (OR5B12).